The following is a 155-amino-acid chain: Sec-independent protein translocase protein TatB (155 aa).

Residues 1 to 21 form a helical membrane-spanning segment; sequence MFGMGFFEILVVLVVAIIFLG. Positions 109-155 are disordered; that stretch reads SLENNAPPKHLNKEVSNREVFHNEPPKEIELIANNNTTKHDKEKEHV. Composition is skewed to basic and acidic residues over residues 119 to 138 and 146 to 155; these read LNKEVSNREVFHNEPPKEIE and TKHDKEKEHV.

The protein belongs to the TatB family. In terms of assembly, the Tat system comprises two distinct complexes: a TatABC complex, containing multiple copies of TatA, TatB and TatC subunits, and a separate TatA complex, containing only TatA subunits. Substrates initially bind to the TatABC complex, which probably triggers association of the separate TatA complex to form the active translocon.

It localises to the cell inner membrane. Functionally, part of the twin-arginine translocation (Tat) system that transports large folded proteins containing a characteristic twin-arginine motif in their signal peptide across membranes. Together with TatC, TatB is part of a receptor directly interacting with Tat signal peptides. TatB may form an oligomeric binding site that transiently accommodates folded Tat precursor proteins before their translocation. This Helicobacter acinonychis (strain Sheeba) protein is Sec-independent protein translocase protein TatB.